The sequence spans 613 residues: Carotenoid dioxygenase (613 aa).

The interval 1–25 (MSPHEVIGTVPKNSTTFRTQADEHD) is disordered. Residues H261, H313, H383, and H595 each contribute to the Fe(2+) site.

This sequence belongs to the carotenoid oxygenase family. It depends on Fe(2+) as a cofactor.

It is found in the cytoplasm. Its subcellular location is the cytosol. It catalyses the reaction torulene + O2 = 4'-apo-beta-carotenal + 3-methyl-2-butenal. It participates in carotenoid biosynthesis. Torulene dioxygenase; part of pathway that mediates the biosynthesis of neurosporaxanthin, a carboxylic apocarotenoid acting as an essential protective pigments and leading to orange pigmentation. Cao-2 mediates the cleavage of torulene into beta-apo-4'-carotenal, the aldehyde corresponding to the acidic neurosporaxanthin. Is not able to use gamma-carotene (that it is not desaturated at the C4'-C5' bond) as substrate, which suggests a high specificity of cao-2 in cleaving the C4'-C5' double bond. Neurosporaxanthin is synthesized from geranyl-geranyl pyrophosphate (GGPP) through several enzymatic activities. Phytoene synthase activity performed by the bifunctional enzyme al-2 first produces phytoene from geranyl-geranyl pyrophosphate (GGPP). The phytoene dehydrogenase al-1 then introduces 5 desaturations to lead to 3,4-didehydrolycopene via the intermediates phytofluene, zeta-carotene, neurosporene and lycopene. Al-2 cyclase activity then converts 3,4-didehydrolycopene into torulene. Al-2 can also convet lycopene into gamma-carotene which in turn is converted to beta-carotene by an additional al-2 cyclization reaction. Torulene is the substrate of the dioxidase cao-2 that breaks the molecule, removing five carbon atoms to yield beta-apo-4'-carotenal, whereas the aldehyde dehydrogenase ylo-1 mediates the last step by converting beta-apo-4'-carotenal into neurosporaxanthin. The polypeptide is Carotenoid dioxygenase (Neurospora crassa (strain ATCC 24698 / 74-OR23-1A / CBS 708.71 / DSM 1257 / FGSC 987)).